A 902-amino-acid chain; its full sequence is Inter-alpha-trypsin inhibitor heavy chain H1 (902 aa).

An N-terminal signal peptide occupies residues 1–28 (MDGTMGLQGLLCLCLASHLALQAMPTQG). Positions 29 to 158 (SPTDSTKGNK…KATFQLTYEE (130 aa)) constitute a VIT domain. Cys-52 carries S-linked (Hex...) cysteine glycosylation. N-linked (GlcNAc...) asparagine glycosylation occurs at Asn-69. Ser-121 is subject to Phosphoserine. N-linked (GlcNAc...) asparagine glycosylation is present at Asn-277. The region spanning 282-442 (NKNVVFVIDI…WNFLEVRALE (161 aa)) is the VWFA domain. 2 positions are modified to phosphothreonine: Thr-394 and Thr-399. Residues 637 to 651 (SASQPSPTHPSSSIQ) show a composition bias toward polar residues. Positions 637–656 (SASQPSPTHPSSSIQKLPDR) are disordered. Ser-639 carries O-linked (GalNAc...) serine glycosylation. O-linked (GalNAc...) threonine glycosylation is present at Thr-644. Asp-663 is subject to Aspartate 1-(chondroitin 4-sulfate)-ester. The propeptide occupies 664 to 902 (PHFIIRVPQK…HTDYIVPDIF (239 aa)). Asn-741 carries N-linked (GlcNAc...) asparagine glycosylation.

Belongs to the ITIH family. I-alpha-I plasma protease inhibitors are assembled from one or two heavy chains (HC) and one light chain, bikunin. Inter-alpha-inhibitor (I-alpha-I) is composed of ITIH1/HC1, ITIH2/HC2 and bikunin. Interacts with TNFAIP6 (via Link and CUB domains). Post-translationally, heavy chains are linked to bikunin via chondroitin 4-sulfate esterified to the alpha-carboxyl of the C-terminal aspartate after propeptide cleavage. In terms of processing, the S-linked glycan is composed of two 6-carbon sugars, possibly Glc or Gal.

Its subcellular location is the secreted. In terms of biological role, may act as a carrier of hyaluronan in serum or as a binding protein between hyaluronan and other matrix protein, including those on cell surfaces in tissues to regulate the localization, synthesis and degradation of hyaluronan which are essential to cells undergoing biological processes. The chain is Inter-alpha-trypsin inhibitor heavy chain H1 (ITIH1) from Sus scrofa (Pig).